The primary structure comprises 297 residues: MSSVYSDKSSSTPAVTGGGFGGEIMLFGVRVKVDPMRKSVSLNDLSQYEHPNANNNNNGGDNNESSKVAQDEGYASADDAVQHQSNSGRERKRGVPWTEEEHKLFLLGLQKVGKGDWRGISRNFVKTRTPTQVASHAQKYFLRRSNLNRRRRRSSLFDITTDSVSVMPIEEVENKQEIPVVAPATLPTTKTNAFPVAPTVGPIIFPVQIDKSREYPTLLRHDHGNSSMLVGPVPMFSMPNPSTAIDLNANHNSTIEPSSLSLRLSLSLDQGQASSTRHSAYNVMSSFSNGESIIRVA.

The segment at 44–96 (DLSQYEHPNANNNNNGGDNNESSKVAQDEGYASADDAVQHQSNSGRERKRGVP) is disordered. Low complexity predominate over residues 52 to 63 (NANNNNNGGDNN). In terms of domain architecture, HTH myb-type spans 89 to 145 (RERKRGVPWTEEEHKLFLLGLQKVGKGDWRGISRNFVKTRTPTQVASHAQKYFLRRS). The segment at residues 117–141 (WRGISRNFVKTRTPTQVASHAQKYF) is a DNA-binding region (H-T-H motif).

It localises to the nucleus. The protein localises to the cytoplasm. It is found in the cytosol. Binds selectively to the DNA sequence 5'-[GA]GATAA-3' and may act as a transcription factor involved in the regulation of drought-responsive genes. Enhances stomatal closure in response to abscisic acid (ABA). Confers drought and salt tolerance. This is Transcription factor MYB1R1 from Solanum tuberosum (Potato).